The chain runs to 312 residues: tRNA uridine(34) hydroxylase (312 aa).

The 96-residue stretch at 130–225 (RGDDVVFFDG…YGEKYGNDGL (96 aa)) folds into the Rhodanese domain. Residue C185 is the Cysteine persulfide intermediate of the active site.

Belongs to the TrhO family.

The catalysed reaction is uridine(34) in tRNA + AH2 + O2 = 5-hydroxyuridine(34) in tRNA + A + H2O. Its function is as follows. Catalyzes oxygen-dependent 5-hydroxyuridine (ho5U) modification at position 34 in tRNAs. The sequence is that of tRNA uridine(34) hydroxylase from Corynebacterium diphtheriae (strain ATCC 700971 / NCTC 13129 / Biotype gravis).